Consider the following 242-residue polypeptide: UPF0246 protein SP70585_1589 (242 aa).

It belongs to the UPF0246 family.

The chain is UPF0246 protein SP70585_1589 from Streptococcus pneumoniae (strain 70585).